Here is a 236-residue protein sequence, read N- to C-terminus: Lipoprotein NlpE (236 aa).

A signal peptide spans 1-20; it reads MVKKAIVTAMAVISLFTLMG. Cys-21 carries the N-palmitoyl cysteine lipid modification. Residue Cys-21 is the site of S-diacylglycerol cysteine attachment. Residues 21 to 100 form an N-terminal domain region; sequence CNNRAEVDTL…WARTADKLVL (80 aa). Residues 21–236 lie on the Periplasmic side of the membrane; the sequence is CNNRAEVDTL…PNQDCSSLGQ (216 aa). The CXXC motif lies at 51 to 54; that stretch reads CADC. Residues 126–236 form a C-terminal domain region; the sequence is PIESQFNYTL…PNQDCSSLGQ (111 aa). The tract at residues 144-156 is could contain a copper-binding motif; it reads MTPMTLRGMYFYM. Cys-165 and Cys-231 are disulfide-bonded.

In terms of assembly, probably exists as a monomer in vivo, can however form homodimers which swap domains. Post-translationally, palmitoylated. In terms of processing, seems to only form a disulfide bond between Cys-165 and Cys-231. The 2 other cysteine residues may however be chemically active.

It is found in the cell outer membrane. Involved in copper homeostasis, could be involved in both copper efflux and the delivery of copper to copper-dependent enzymes. Required for efficient binding of stationary phase cells to hydrophobic surfaces, part of the process of biofilm formation. Functions during envelope stress responses; when overproduced induces degP through the activation of the two-component envelope stress response system CpxA/CpxR. DegP induction seems to require membrane anchoring of this protein. Structural changes and/or interaction of the CXXC motif with its environment may lead to activation of the Cpx stress response. The protein is Lipoprotein NlpE of Escherichia coli (strain K12).